Reading from the N-terminus, the 213-residue chain is Orotate phosphoribosyltransferase (213 aa).

Residue Lys-26 participates in 5-phospho-alpha-D-ribose 1-diphosphate binding. Phe-34–Phe-35 contacts orotate. 5-phospho-alpha-D-ribose 1-diphosphate contacts are provided by residues Tyr-72–Lys-73, Arg-99, Lys-100, Lys-103, His-105, and Asp-124–Ala-132. Positions 128 and 156 each coordinate orotate.

Belongs to the purine/pyrimidine phosphoribosyltransferase family. PyrE subfamily. In terms of assembly, homodimer. The cofactor is Mg(2+).

The enzyme catalyses orotidine 5'-phosphate + diphosphate = orotate + 5-phospho-alpha-D-ribose 1-diphosphate. Its pathway is pyrimidine metabolism; UMP biosynthesis via de novo pathway; UMP from orotate: step 1/2. Its function is as follows. Catalyzes the transfer of a ribosyl phosphate group from 5-phosphoribose 1-diphosphate to orotate, leading to the formation of orotidine monophosphate (OMP). The protein is Orotate phosphoribosyltransferase of Salmonella paratyphi A (strain ATCC 9150 / SARB42).